Here is a 264-residue protein sequence, read N- to C-terminus: Transmembrane protein 41A (264 aa).

The first 17 residues, 1-17 (MRPLLGLLLVFAGCTFA), serve as a signal peptide directing secretion. Transmembrane regions (helical) follow at residues 67 to 87 (AYVF…AIPG), 100 to 122 (GPWL…CYLL), 153 to 173 (LFFF…FLNL), 175 to 195 (APIL…GLIP), and 219 to 239 (WDTV…GTLI). Residues 96-207 (GALFGPWLGL…FICVQTGSIL (112 aa)) form a VTT domain region. Residue N250 is glycosylated (N-linked (GlcNAc...) asparagine).

It belongs to the TMEM41 family.

It is found in the membrane. In Homo sapiens (Human), this protein is Transmembrane protein 41A (TMEM41A).